The sequence spans 1318 residues: Uromodulin-like 1 (1318 aa).

A signal peptide spans 1 to 21 (MLRTSGLALLALVSAVGPSQA). Residues 22 to 1272 (SGFTEKGLSL…HAEAGLGAGY (1251 aa)) lie on the Extracellular side of the membrane. The EMI domain maps to 33–106 (GYQLCSHRVT…YEQLGLYCVL (74 aa)). Disulfide bonds link Cys-37–Cys-94, Cys-61–Cys-70, and Cys-93–Cys-104. The N-linked (GlcNAc...) asparagine glycan is linked to Asn-89. N-linked (GlcNAc...) asparagine glycosylation is present at Asn-109. One can recognise a WAP domain in the interval 114–158 (FTSRPGACPAEGPEPSTSPCSLDIDCPGLEKCCPWSGGRYCMAPA). Asn-172 is a glycosylation site (N-linked (GlcNAc...) asparagine). An EGF-like 1; calcium-binding domain is found at 264 to 313 (DVNECFYEELNACSGRELCANLEGSYWCVCHQEAPATSPRKLNLEWEDCP). In terms of domain architecture, Fibronectin type-III 1 spans 314–398 (PVSDYVVLNV…TTLTIKTNAQ (85 aa)). Residues Asn-322, Asn-335, and Asn-417 are each glycosylated (N-linked (GlcNAc...) asparagine). An SEA 1 domain is found at 396-510 (NAQVFEVTIK…QGTRVQDWDE (115 aa)). In terms of domain architecture, EGF-like 2; calcium-binding spans 507-552 (DWDECVDSAEHDCSPAAWCINLEGSYTCQCRTTRDATPSRAGRACE). 3 disulfides stabilise this stretch: Cys-511–Cys-525, Cys-519–Cys-534, and Cys-536–Cys-551. Asn-585 carries an N-linked (GlcNAc...) asparagine glycan. Residues 593-655 (GYPQGTPAAG…PSPTEDPTGH (63 aa)) form a disordered region. The Fibronectin type-III 2 domain maps to 702–791 (VPVSIGRIMV…HLKVRTAARK (90 aa)). Asn-713 is a glycosylation site (N-linked (GlcNAc...) asparagine). The 113-residue stretch at 788–900 (AARKLIGKVR…GDTFIQDYDE (113 aa)) folds into the SEA 2 domain. The EGF-like 3; calcium-binding domain occupies 897-938 (DYDECERKEDDCVPGTSCRNTLGSFTCSCEGGAPDFPVEYSE). Cystine bridges form between Cys-901-Cys-914 and Cys-908-Cys-923. The segment at 938 to 957 (ERPCEGDSPGNETWATSPER) is disordered. Residues Asn-984 and Asn-1050 are each glycosylated (N-linked (GlcNAc...) asparagine). Residues 992-1235 (LCEIEKVVVA…ATCKINCNNF (244 aa)) enclose the ZP domain. Cys-1157 and Cys-1215 are disulfide-bonded. The chain crosses the membrane as a helical span at residues 1273-1293 (VVLIVVAIFVLVAGTATLLIV). Residues 1294 to 1318 (RYQRMNGRYNFKIQSNNFSYQVFYE) are Cytoplasmic-facing.

Isoform 4 is expressed at low level in kidney, testis and fetal thymus. Isoform 3 is expressed at low level in prostate, testis and fetal thymus.

Its subcellular location is the cell membrane. It is found in the cytoplasm. The chain is Uromodulin-like 1 (UMODL1) from Homo sapiens (Human).